Here is a 156-residue protein sequence, read N- to C-terminus: Transcriptional repressor NrdR (156 aa).

A zinc finger lies at 3-34 (CPFCGSMDTRVLDSRPTLDGAAIRRRRECISC). One can recognise an ATP-cone domain in the interval 49–139 (VLVIKKDGRR…VYRDFREVDQ (91 aa)).

This sequence belongs to the NrdR family. The cofactor is Zn(2+).

Its function is as follows. Negatively regulates transcription of bacterial ribonucleotide reductase nrd genes and operons by binding to NrdR-boxes. The polypeptide is Transcriptional repressor NrdR (Thermotoga neapolitana (strain ATCC 49049 / DSM 4359 / NBRC 107923 / NS-E)).